We begin with the raw amino-acid sequence, 159 residues long: D-aminoacyl-tRNA deacylase (159 aa).

Positions 146-147 (GP) match the Gly-cisPro motif, important for rejection of L-amino acids motif.

It belongs to the DTD family. Homodimer.

The protein localises to the cytoplasm. It carries out the reaction glycyl-tRNA(Ala) + H2O = tRNA(Ala) + glycine + H(+). The catalysed reaction is a D-aminoacyl-tRNA + H2O = a tRNA + a D-alpha-amino acid + H(+). An aminoacyl-tRNA editing enzyme that deacylates mischarged D-aminoacyl-tRNAs. Also deacylates mischarged glycyl-tRNA(Ala), protecting cells against glycine mischarging by AlaRS. Acts via tRNA-based rather than protein-based catalysis; rejects L-amino acids rather than detecting D-amino acids in the active site. By recycling D-aminoacyl-tRNA to D-amino acids and free tRNA molecules, this enzyme counteracts the toxicity associated with the formation of D-aminoacyl-tRNA entities in vivo and helps enforce protein L-homochirality. In Bifidobacterium animalis subsp. lactis (strain AD011), this protein is D-aminoacyl-tRNA deacylase.